Here is a 259-residue protein sequence, read N- to C-terminus: MAVISMKQLLEAGVHFGHQTRRWNPKMAKYIFTERNGIHVIDLQQTVKYADQAYDFMRDAAANDAVVLFVGTKKQAADAVAEEAVRSGQYFINHRWLGGTLTNWGTIQKRIARLKEIKRMEEDGTFEVLPKKEVALLNKQRARLEKFLGGIEDMPRIPDVMYVVDPHKEQIAVKEAKKLGIPVVAMVDTNTDPDDIDVIIPANDDAIRAVKLITAKLADAIIEGRQGDDAVAVEAEFAASETQADSIEEIVEVVEGDNA.

The protein belongs to the universal ribosomal protein uS2 family.

The protein is Small ribosomal subunit protein uS2 of Streptococcus pneumoniae (strain Hungary19A-6).